The primary structure comprises 259 residues: Peptide methionine sulfoxide reductase (259 aa).

Residues 66–90 (TRTPADASMDQSSIAQGPDDDIPAP) are disordered.

The protein belongs to the MsrA Met sulfoxide reductase family.

The catalysed reaction is L-methionyl-[protein] + [thioredoxin]-disulfide + H2O = L-methionyl-(S)-S-oxide-[protein] + [thioredoxin]-dithiol. It carries out the reaction [thioredoxin]-disulfide + L-methionine + H2O = L-methionine (S)-S-oxide + [thioredoxin]-dithiol. Its function is as follows. Has an important function as a repair enzyme for proteins that have been inactivated by oxidation. Catalyzes the reversible oxidation-reduction of methionine sulfoxide in proteins to methionine. This Lactuca sativa (Garden lettuce) protein is Peptide methionine sulfoxide reductase.